The primary structure comprises 355 residues: Tetraacyldisaccharide 4'-kinase (355 aa).

Residue 54 to 61 (TVGGAGKT) participates in ATP binding.

Belongs to the LpxK family.

The enzyme catalyses a lipid A disaccharide + ATP = a lipid IVA + ADP + H(+). Its pathway is glycolipid biosynthesis; lipid IV(A) biosynthesis; lipid IV(A) from (3R)-3-hydroxytetradecanoyl-[acyl-carrier-protein] and UDP-N-acetyl-alpha-D-glucosamine: step 6/6. Transfers the gamma-phosphate of ATP to the 4'-position of a tetraacyldisaccharide 1-phosphate intermediate (termed DS-1-P) to form tetraacyldisaccharide 1,4'-bis-phosphate (lipid IVA). This is Tetraacyldisaccharide 4'-kinase from Rhizobium rhizogenes (strain K84 / ATCC BAA-868) (Agrobacterium radiobacter).